Reading from the N-terminus, the 254-residue chain is Glucosamine-6-phosphate deaminase (254 aa).

Asp-67 functions as the Proton acceptor; for enolization step in the catalytic mechanism. Residue Asn-136 is the For ring-opening step of the active site. The active-site Proton acceptor; for ring-opening step is the His-138. Glu-143 acts as the For ring-opening step in catalysis.

This sequence belongs to the glucosamine/galactosamine-6-phosphate isomerase family. NagB subfamily.

The enzyme catalyses alpha-D-glucosamine 6-phosphate + H2O = beta-D-fructose 6-phosphate + NH4(+). It participates in amino-sugar metabolism; N-acetylneuraminate degradation; D-fructose 6-phosphate from N-acetylneuraminate: step 5/5. Functionally, catalyzes the reversible isomerization-deamination of glucosamine 6-phosphate (GlcN6P) to form fructose 6-phosphate (Fru6P) and ammonium ion. This Brevibacillus brevis (strain 47 / JCM 6285 / NBRC 100599) protein is Glucosamine-6-phosphate deaminase.